Reading from the N-terminus, the 807-residue chain is Glycerol-3-phosphate acyltransferase (807 aa).

The short motif at 305 to 310 (CHRSHM) is the HXXXXD motif element.

Belongs to the GPAT/DAPAT family.

Its subcellular location is the cell inner membrane. The enzyme catalyses sn-glycerol 3-phosphate + an acyl-CoA = a 1-acyl-sn-glycero-3-phosphate + CoA. It participates in phospholipid metabolism; CDP-diacylglycerol biosynthesis; CDP-diacylglycerol from sn-glycerol 3-phosphate: step 1/3. In Klebsiella pneumoniae subsp. pneumoniae (strain ATCC 700721 / MGH 78578), this protein is Glycerol-3-phosphate acyltransferase.